The primary structure comprises 128 residues: MAEWHKIIEDISKNNKFEDAAIVDYKTTKNVLAAIPNRTFAKINPLITNRNILKPLIGQKYCIVYTNSLMDENTYAMELLTGYAPVSPIVIARTHTALIFLMGKPTTSRRDVYRTCRDHATRVRATGN.

It belongs to the profilin family.

In terms of biological role, more likely to influence phosphoinositide metabolism than actin assembly. The sequence is that of Profilin from Homo sapiens (Human).